A 329-amino-acid chain; its full sequence is Sex comb on midleg-like protein 1 (329 aa).

Residues serine 138 and serine 238 each carry the phosphoserine modification. In terms of domain architecture, SAM spans 258–325 (WSVEAVVLFL…YYIDRLKQGK (68 aa)).

The protein belongs to the SCM family.

It localises to the nucleus. Its function is as follows. Putative Polycomb group (PcG) protein. PcG proteins act by forming multiprotein complexes, which are required to maintain the transcriptionally repressive state of homeotic genes throughout development. May be involved in spermatogenesis during sexual maturation. This Hoolock hoolock (Western hoolock gibbon) protein is Sex comb on midleg-like protein 1 (SCML1).